The chain runs to 123 residues: Histone H2B (123 aa).

The disordered stretch occupies residues Met-1–Arg-31. Pro-2 is modified (N-methylproline; partial). Lys-44 is subject to N6-succinyllysine. The O-linked (GlcNAc) serine glycan is linked to Ser-110. N6-succinyllysine occurs at positions 114 and 118. Lys-118 participates in a covalent cross-link: Glycyl lysine isopeptide (Lys-Gly) (interchain with G-Cter in ubiquitin).

It belongs to the histone H2B family. In terms of assembly, the nucleosome is a histone octamer containing two molecules each of H2A, H2B, H3 and H4 assembled in one H3-H4 heterotetramer and two H2A-H2B heterodimers. The octamer wraps approximately 147 bp of DNA. In terms of processing, phosphorylated by the catalytic component of the Dbf4-dependent kinase (DDK) complex Cdc7. Post-translationally, monoubiquitination of Lys-118 by Bre1 gives a specific tag for epigenetic transcriptional activation and is also prerequisite for histone H3 'Lys-4' and 'Lys-79' methylation. Deubiquitination of Lys-118 by the SAGA complex is involved in activating transcription of a large subset of genes. Methylation at Pro-2 increases upon heat shock. In terms of processing, glcNAcylation at Ser-110 promotes monoubiquitination of Lys-118. It fluctuates in response to extracellular glucose, and associates with transcribed genes.

The protein resides in the nucleus. Its subcellular location is the chromosome. Functionally, core component of nucleosome. Nucleosomes wrap and compact DNA into chromatin, limiting DNA accessibility to the cellular machineries which require DNA as a template. Histones thereby play a central role in transcription regulation, DNA repair, DNA replication and chromosomal stability. DNA accessibility is regulated via a complex set of post-translational modifications of histones, also called histone code, and nucleosome remodeling. The sequence is that of Histone H2B (His2B) from Drosophila sechellia (Fruit fly).